We begin with the raw amino-acid sequence, 455 residues long: SUN domain-containing protein 2 (455 aa).

Over residues 1–12 (MSASTVSITASP) the composition is skewed to polar residues. The tract at residues 1–99 (MSASTVSITA…RTRKSQGNKI (99 aa)) is disordered. The residue at position 2 (serine 2) is an N-acetylserine. The Nuclear segment spans residues 2–105 (SASTVSITAS…GNKIDRGKWK (104 aa)). Serine 63 is subject to Phosphoserine. Low complexity predominate over residues 74-88 (KSGSTATGTNTTTTQ). The short motif at 88–95 (QRRTRKSQ) is the Nuclear localization signal element. The helical transmembrane segment at 106-128 (TVVRVFAKQFGALLLLVGLIQLI) threads the bilayer. The Perinuclear space portion of the chain corresponds to 129–455 (RKLTLKDSSL…ELDSVSVAHA (327 aa)). A coiled-coil region spans residues 201–225 (LHSELKKVESKTERLQVSVDELNAK). The 163-residue stretch at 285-447 (GGAFVMGHSD…YRFRVHGREL (163 aa)) folds into the SUN domain.

Forms homomers (e.g. dimers, trimers and tetramers) and heteromers with SUN1. Interacts with SUN3, SUN4 and TIK. Core component of the LINC complex which is composed of inner nuclear membrane SUN domain-containing proteins coupled to outer nuclear membrane WIP and WIT proteins. The LINC complex also involves nucleoskeletal proteins CRWN/LINC and possibly KAKU4 and the cytoskeletal myosin KAKU1. Interacts with LINC1, WIP1, WIP2 and WIP3 at the nuclear envelope (NE). Interacts with SINE1, SINE2, SINE3 and SINE4. Interacts with NEAP1, NEA2 and NEAP3. In terms of tissue distribution, expressed in roots, hypocotyls, cotyledons and leaves and inflorescences.

Its subcellular location is the nucleus inner membrane. It localises to the cytoplasm. The protein localises to the cytoskeleton. It is found in the phragmoplast. The protein resides in the endoplasmic reticulum membrane. Its subcellular location is the nucleus envelope. Functionally, component of SUN-protein-containing multivariate complexes also called LINC complexes which link the nucleoskeleton and cytoskeleton by providing versatile outer nuclear membrane attachment sites for cytoskeletal filaments. Required for the maintenance and/or formation of polarized nuclear shape in root hairs. Modulates the anchoring and mobility of WIP proteins in the nuclear envelope (NE). In association with SUN1, may be involved in telomere attachment to nuclear envelope in the prophase of meiosis. As component of the SUN-WIP-WIT2-KAKU1 complex, mediates the transfer of cytoplasmic forces to the nuclear envelope (NE), leading to nuclear shape changes. This Arabidopsis thaliana (Mouse-ear cress) protein is SUN domain-containing protein 2.